The primary structure comprises 354 residues: RNA 3'-terminal phosphate cyclase (354 aa).

ATP contacts are provided by residues Q100 and 290–293 (HMGD). The active-site Tele-AMP-histidine intermediate is H316.

The protein belongs to the RNA 3'-terminal cyclase family. Type 1 subfamily.

It is found in the cytoplasm. It carries out the reaction a 3'-end 3'-phospho-ribonucleotide-RNA + ATP = a 3'-end 2',3'-cyclophospho-ribonucleotide-RNA + AMP + diphosphate. In terms of biological role, catalyzes the conversion of 3'-phosphate to a 2',3'-cyclic phosphodiester at the end of RNA. The mechanism of action of the enzyme occurs in 3 steps: (A) adenylation of the enzyme by ATP; (B) transfer of adenylate to an RNA-N3'P to produce RNA-N3'PP5'A; (C) and attack of the adjacent 2'-hydroxyl on the 3'-phosphorus in the diester linkage to produce the cyclic end product. The biological role of this enzyme is unknown but it is likely to function in some aspects of cellular RNA processing. This Caldivirga maquilingensis (strain ATCC 700844 / DSM 13496 / JCM 10307 / IC-167) protein is RNA 3'-terminal phosphate cyclase.